Reading from the N-terminus, the 249-residue chain is UDP-N-acetyl-D-mannosaminuronic acid transferase (249 aa).

The protein belongs to the glycosyltransferase 26 family.

It carries out the reaction UDP-N-acetyl-alpha-D-mannosaminouronate + N-acetyl-alpha-D-glucosaminyl-di-trans,octa-cis-undecaprenyl diphosphate = beta-D-ManNAcA-(1-&gt;4)-alpha-D-GlcNAc-di-trans,octa-cis-undecaprenyl diphosphate + UDP + H(+). It participates in bacterial outer membrane biogenesis; enterobacterial common antigen biosynthesis. Catalyzes the synthesis of Und-PP-GlcNAc-ManNAcA (Lipid II), the second lipid-linked intermediate involved in enterobacterial common antigen (ECA) synthesis. In Pectobacterium carotovorum subsp. carotovorum (strain PC1), this protein is UDP-N-acetyl-D-mannosaminuronic acid transferase.